A 128-amino-acid chain; its full sequence is Holo-[acyl-carrier-protein] synthase (128 aa).

Residues aspartate 10 and glutamate 59 each contribute to the Mg(2+) site.

Belongs to the P-Pant transferase superfamily. AcpS family. Requires Mg(2+) as cofactor.

It localises to the cytoplasm. It catalyses the reaction apo-[ACP] + CoA = holo-[ACP] + adenosine 3',5'-bisphosphate + H(+). Its function is as follows. Transfers the 4'-phosphopantetheine moiety from coenzyme A to a Ser of acyl-carrier-protein. In Syntrophotalea carbinolica (strain DSM 2380 / NBRC 103641 / GraBd1) (Pelobacter carbinolicus), this protein is Holo-[acyl-carrier-protein] synthase.